Reading from the N-terminus, the 229-residue chain is Cytidylate kinase (229 aa).

12 to 20 (GPSGTGKSS) lines the ATP pocket.

It belongs to the cytidylate kinase family. Type 1 subfamily.

The protein localises to the cytoplasm. It catalyses the reaction CMP + ATP = CDP + ADP. The enzyme catalyses dCMP + ATP = dCDP + ADP. The polypeptide is Cytidylate kinase (Rhodococcus jostii (strain RHA1)).